The primary structure comprises 725 residues: Ferric reduction oxidase 2 (725 aa).

The Cytoplasmic segment spans residues 1–28; sequence MEIEKSNNGGSNPSAGEEFKDMIKGVTK. A helical transmembrane segment spans residues 29–48; the sequence is FLMMVIFLGTIMLWIMMPTL. Over 49 to 74 the chain is Extracellular; that stretch reads TYRTKWLPHLRIKFGTSTYFGATGTT. The helical transmembrane segment at 75–93 threads the bilayer; it reads LFMYMFPMMVVACLGCVYL. The Cytoplasmic portion of the chain corresponds to 94-125; the sequence is HFKNRKSPHHIDRETKGGVWSKLRKPMLVKGP. Residues 126 to 149 traverse the membrane as a helical segment; the sequence is LGIVSVTEITFLAMFVALLLWCFI. Residues 150–217 are Extracellular-facing; the sequence is TYLRNSFATI…MGLTSESSIK (68 aa). Residues 183–303 form the Ferric oxidoreductase domain; it reads LGLIGNICLA…YLYIVFMLFF (121 aa). A helical transmembrane segment spans residues 218 to 241; sequence YHIWLGHMVMALFTVHGLCYIIYW. Residues His219 and His233 each coordinate heme. Over 242–291 the chain is Cytoplasmic; that stretch reads ASMHEISQMIMWDTKGVSNLAGEIALAAGLVMWATTYPKIRRRFFEVFFY. The chain crosses the membrane as a helical span at residues 292–316; that stretch reads THYLYIVFMLFFVLHVGISFSFIAL. Heme-binding residues include His293 and His306. The Extracellular portion of the chain corresponds to 317–338; sequence PGFYIFLVDRFLRFLQSRENVR. Positions 332 to 437 constitute an FAD-binding FR-type domain; sequence QSRENVRLLA…EGPYGPASAD (106 aa). Residues 339-359 form a helical membrane-spanning segment; it reads LLAARILPSDTMELTFSKNSK. At 360-554 the chain is on the cytoplasmic side; that stretch reads LVYSPTSIMF…SISSILGPNS (195 aa). 381–384 contacts FAD; sequence HPFT. 429-432 serves as a coordination point for NAD(+); that stretch reads GPYG. The helical transmembrane segment at 555 to 577 threads the bilayer; sequence WLWLGAILASSFLIFMIIIGIIT. Residues 578–597 are Extracellular-facing; it reads RYYIYPIDHNTNKIYSLTSK. Residues 598–619 form a helical membrane-spanning segment; that stretch reads TIIYILVISVSIMATCSAAMLW. The Cytoplasmic segment spans residues 620–725; it reads NKKKYGKVES…LHFESISFSW (106 aa).

Belongs to the ferric reductase (FRE) family. Requires FAD as cofactor. In terms of tissue distribution, expressed in the epidermal cells of the roots. High expression in lateral roots and root hairs. Detected in leaves, stems, siliques and in flowers in anthers and styles.

It localises to the cell membrane. It catalyses the reaction 2 a Fe(II)-siderophore + NAD(+) + H(+) = 2 a Fe(III)-siderophore + NADH. Its function is as follows. Flavocytochrome that transfers electrons across the plasma membrane to reduce ferric iron chelates to form soluble ferrous iron in the rhizosphere. May be involved in the delivery of iron to developing pollen grains. Also acts as a copper-chelate reductase. Involved in glycine betaine-mediated chilling tolerance and reactive oxygen species accumulation. This is Ferric reduction oxidase 2 (FRO2) from Arabidopsis thaliana (Mouse-ear cress).